The sequence spans 395 residues: Flap endonuclease 1 (395 aa).

The N-domain stretch occupies residues 1 to 104 (MGIKHLYQVI…GELAKRFMRK (104 aa)). Aspartate 34 contributes to the Mg(2+) binding site. Residues arginine 47 and arginine 70 each coordinate DNA. Mg(2+)-binding residues include aspartate 86, glutamate 158, glutamate 160, aspartate 179, and aspartate 181. Positions 122–253 (DVEKFSRRTV…NTALKLIRDH (132 aa)) are I-domain. A DNA-binding site is contributed by glutamate 158. DNA contacts are provided by glycine 231 and aspartate 233. Mg(2+) is bound at residue aspartate 233. The tract at residues 341 to 349 (QQSRLEGFF) is interaction with PCNA. A compositionally biased stretch (basic and acidic residues) spans 357–389 (QEKATLKRKHEEKLELQKKKKKEEAKAKKEAKS). Residues 357 to 395 (QEKATLKRKHEEKLELQKKKKKEEAKAKKEAKSKPRGAV) form a disordered region.

This sequence belongs to the XPG/RAD2 endonuclease family. FEN1 subfamily. In terms of assembly, interacts with PCNA. Three molecules of FEN1 bind to one PCNA trimer with each molecule binding to one PCNA monomer. PCNA stimulates the nuclease activity without altering cleavage specificity. The cofactor is Mg(2+). In terms of processing, phosphorylated. Phosphorylation upon DNA damage induces relocalization to the nuclear plasma.

Its subcellular location is the nucleus. It is found in the nucleolus. The protein localises to the nucleoplasm. It localises to the mitochondrion. Structure-specific nuclease with 5'-flap endonuclease and 5'-3' exonuclease activities involved in DNA replication and repair. During DNA replication, cleaves the 5'-overhanging flap structure that is generated by displacement synthesis when DNA polymerase encounters the 5'-end of a downstream Okazaki fragment. It enters the flap from the 5'-end and then tracks to cleave the flap base, leaving a nick for ligation. Also involved in the long patch base excision repair (LP-BER) pathway, by cleaving within the apurinic/apyrimidinic (AP) site-terminated flap. Acts as a genome stabilization factor that prevents flaps from equilibrating into structures that lead to duplications and deletions. Also possesses 5'-3' exonuclease activity on nicked or gapped double-stranded DNA, and exhibits RNase H activity. Also involved in replication and repair of rDNA and in repairing mitochondrial DNA. In Ajellomyces dermatitidis (strain ER-3 / ATCC MYA-2586) (Blastomyces dermatitidis), this protein is Flap endonuclease 1.